The following is a 50-amino-acid chain: Bacteriocin-like protein SboX (50 aa).

The polypeptide is Bacteriocin-like protein SboX (sboX) (Bacillus subtilis (strain 168)).